The primary structure comprises 168 residues: Protein OPG162 (168 aa).

Residues 1–14 (MKSLNRQTVSRFKK) are Intravirion-facing. The helical transmembrane segment at 15-37 (LSVPAAIMMILSTIISGIGTFLH) threads the bilayer. Topologically, residues 38 to 168 (YKEELMPSAC…SVLCVKKFYK (131 aa)) are virion surface. Residues 54 to 163 (YDKHCYLDTN…CKSTQSVLCV (110 aa)) form the C-type lectin domain. Cystine bridges form between Cys-75-Cys-162 and Cys-141-Cys-154. Asn-133 carries N-linked (GlcNAc...) asparagine; by host glycosylation.

Belongs to the orthopoxvirus OPG162 protein family. In terms of assembly, interacts with protein OPG161. Interacts with protein OPG164. Interacts with protein OPG190.

The protein localises to the virion membrane. The protein resides in the host Golgi apparatus. Its function is as follows. Forms a complex with OPG162 and OPG190 to coordinate the incorporation of OPG164 into wrapped enveloped virion (EV) membranes and, subsequently, the production of actin tails. Therefore plays an essential role in efficient cell-to-cell spread of viral particles. The protein is Protein OPG162 (OPG162) of Vaccinia virus (strain Western Reserve) (VACV).